The following is a 213-amino-acid chain: Large ribosomal subunit protein eL14 (213 aa).

At Lys79 the chain carries N6-acetyllysine. Lys85 is modified (N6-acetyllysine; alternate). Lys85 carries the post-translational modification N6-succinyllysine; alternate. Lys124 is covalently cross-linked (Glycyl lysine isopeptide (Lys-Gly) (interchain with G-Cter in SUMO2)). The residue at position 139 (Ser139) is a Phosphoserine. The interval 166–213 (TAGKKAPAQKAPAQKAAGQKAAPPPKAQKVQKPPAQKAPAPKASGEKA) is disordered. The 1-1; approximate repeat unit spans residues 169-173 (KKAPA). Residues 169–188 (KKAPAQKAPAQKAAGQKAAP) form a 4 X 5 AA tandem repeats of Q-K-A-[APS]-X region. 5 repeat units span residues 174–178 (QKAPA), 179–183 (QKAAG), 184–188 (QKAAP), 191–193 (KAQ), and 194–196 (KVQ). The 2 X 3 AA tandem repeats of K-G-Q stretch occupies residues 191–196 (KAQKVQ). Lys202 carries the N6-succinyllysine modification.

The protein belongs to the eukaryotic ribosomal protein eL14 family. Component of the large ribosomal subunit.

Its subcellular location is the cytoplasm. Its function is as follows. Component of the large ribosomal subunit. The ribosome is a large ribonucleoprotein complex responsible for the synthesis of proteins in the cell. The chain is Large ribosomal subunit protein eL14 (RPL14) from Sus scrofa (Pig).